Here is a 202-residue protein sequence, read N- to C-terminus: Small ribosomal subunit protein uS4 (202 aa).

Positions 22 to 43 (TRKSARRAYPPGQHGQNRKKRS) are disordered. The region spanning 90–152 (MRLDNTVFRL…AQSRKLVEAN (63 aa)) is the S4 RNA-binding domain.

It belongs to the universal ribosomal protein uS4 family. As to quaternary structure, part of the 30S ribosomal subunit. Contacts protein S5. The interaction surface between S4 and S5 is involved in control of translational fidelity.

Its function is as follows. One of the primary rRNA binding proteins, it binds directly to 16S rRNA where it nucleates assembly of the body of the 30S subunit. In terms of biological role, with S5 and S12 plays an important role in translational accuracy. The chain is Small ribosomal subunit protein uS4 from Nostoc punctiforme (strain ATCC 29133 / PCC 73102).